Reading from the N-terminus, the 182-residue chain is MKEQEIQENMNKSIEATQRNFNTIRTGRANASLLDRISVEYYGAETPIKSLATISTVDSQTISIQPFDISCLQAIEKSISMSDLGITPNNDGKVIRINVPPLTEERRKEFCKLASKYAEEGKVALRNIRRDAVDKEKKDEKDGLISIDESRDNQSEIQKITNKFIALIETKLSEKEKEILKV.

The protein belongs to the RRF family.

It is found in the cytoplasm. Functionally, responsible for the release of ribosomes from messenger RNA at the termination of protein biosynthesis. May increase the efficiency of translation by recycling ribosomes from one round of translation to another. This Prochlorococcus marinus (strain MIT 9312) protein is Ribosome-recycling factor.